A 536-amino-acid chain; its full sequence is Glucan 1,6-alpha-glucosidase (536 aa).

The active-site Nucleophile is Asp194. Glu236 functions as the Proton donor in the catalytic mechanism.

It belongs to the glycosyl hydrolase 13 family.

The protein localises to the cytoplasm. The enzyme catalyses Hydrolysis of (1-&gt;6)-alpha-D-glucosidic linkages in (1-&gt;6)-alpha-D-glucans and derived oligosaccharides.. The physiological substrates may be short isomaltosaccharides. In Streptococcus mutans serotype c (strain ATCC 700610 / UA159), this protein is Glucan 1,6-alpha-glucosidase (dexB).